Here is a 274-residue protein sequence, read N- to C-terminus: Thiamine kinase (274 aa).

This sequence belongs to the thiamine kinase family.

It catalyses the reaction thiamine + ATP = thiamine phosphate + ADP + H(+). It participates in cofactor biosynthesis; thiamine diphosphate biosynthesis; thiamine phosphate from thiamine: step 1/1. Functionally, catalyzes the ATP-dependent phosphorylation of thiamine to thiamine phosphate. Is involved in thiamine salvage. The chain is Thiamine kinase from Escherichia coli O139:H28 (strain E24377A / ETEC).